Consider the following 351-residue polypeptide: Probable glucuronosyltransferase Os10g0205300 (351 aa).

Over 1–11 (MAAPPCPPRRP) the chain is Cytoplasmic. A helical; Signal-anchor for type II membrane protein membrane pass occupies residues 12-32 (ISAPCFLLCFLLGFVAGLFPF). Over 33 to 351 (AHRHLHLDLH…PLKKEARPLL (319 aa)) the chain is Lumenal. Positions 138–169 (SSPVPDAPQDRPRRRGRRQDRPAVDSRARQRN) are disordered. Residues 156–169 (QDRPAVDSRARQRN) are compositionally biased toward basic and acidic residues. Asparagine 259 carries N-linked (GlcNAc...) asparagine glycosylation.

This sequence belongs to the glycosyltransferase 43 family.

It localises to the golgi apparatus membrane. Its function is as follows. Involved in the synthesis of glucuronoxylan hemicellulose in secondary cell walls. The protein is Probable glucuronosyltransferase Os10g0205300 of Oryza sativa subsp. japonica (Rice).